The primary structure comprises 323 residues: Protease Do-like 5, chloroplastic (323 aa).

Residues 1–28 (MTMALASSKAFSSIFNTLSPINQSKFVL) constitute a chloroplast transit peptide. Residues 29 to 73 (ACSGSNHVDVIDRRRRIMIFGSSLALTSSLLGSNQQRLPMESAIA) constitute a thylakoid transit peptide. Active-site charge relay system residues include histidine 147, aspartate 188, and serine 266. A serine protease region spans residues 186 to 283 (DNDLAVLKIE…YGHTIGVNTA (98 aa)).

The protein belongs to the peptidase S1C family.

The protein localises to the plastid. It localises to the chloroplast thylakoid lumen. Its function is as follows. Probable serine protease. The chain is Protease Do-like 5, chloroplastic (DEGP5) from Arabidopsis thaliana (Mouse-ear cress).